The following is a 160-amino-acid chain: SPbeta prophage-derived uncharacterized protein YokE (160 aa).

The chain is SPbeta prophage-derived uncharacterized protein YokE (yokE) from Bacillus subtilis (strain 168).